A 207-amino-acid polypeptide reads, in one-letter code: Ras-related protein Rab-8B (207 aa).

S17, G18, V19, G20, K21, T22, C23, T35, S39, and T40 together coordinate GTP. Residue T22 participates in Mg(2+) binding. 2 consecutive short sequence motifs (switch) follow at residues 31–45 (DAFNTTFISTIGIDF) and 63–80 (DTAGQERFRTITTAYYRG). 2 residues coordinate Mg(2+): T40 and D63. Residue G66 participates in GTP binding. Phosphothreonine; by LRRK2 is present on T72. The GTP site is built by N121, K122, D124, A152, and K153. Residues S180 and S183 each carry the phosphoserine modification. C204 is modified (cysteine methyl ester). C204 carries S-geranylgeranyl cysteine lipidation. The propeptide at 205–207 (SLL) is removed in mature form.

It belongs to the small GTPase superfamily. Rab family. In terms of assembly, associated with actin, delta-catenin and alpha and beta tubulins. Interacts with OTOF. Interacts with PEX5R. Interacts with RAB3IP. Interacts with VIM. Interacts with CDH1. Interacts with MICALL2. Interacts with GDI1, GDI2, CHML and CHM; phosphorylation at Thr-72 disrupts these interactions. Interacts with MICAL1. The cofactor is Mg(2+). Post-translationally, phosphorylation of Thr-72 in the switch II region by LRRK2 prevents the association of RAB regulatory proteins, including CHM, CHML and RAB GDP dissociation inhibitors GDI1 and GDI2.

Its subcellular location is the cell membrane. The protein resides in the cytoplasmic vesicle. It localises to the phagosome membrane. The protein localises to the endosome membrane. The enzyme catalyses GTP + H2O = GDP + phosphate + H(+). Regulated by guanine nucleotide exchange factors (GEFs) including RAB3IP/RABIN8 which promotes the exchange of bound GDP for free GTP. Regulated by GTPase activating proteins (GAPs) which increase the GTP hydrolysis activity. Inhibited by GDP dissociation inhibitors (GDIs). The small GTPases Rab are key regulators of intracellular membrane trafficking, from the formation of transport vesicles to their fusion with membranes. Rabs cycle between an inactive GDP-bound form and an active GTP-bound form that is able to recruit to membranes different sets of downstream effectors directly responsible for vesicle formation, movement, tethering and fusion. RAB8B may be involved in polarized vesicular trafficking and neurotransmitter release. May participate in cell junction dynamics in Sertoli cells. May also participate in the export of a subset of neosynthesized proteins through a Rab8-Rab10-Rab11-dependent endososomal export route. This Mus musculus (Mouse) protein is Ras-related protein Rab-8B.